We begin with the raw amino-acid sequence, 145 residues long: NADH-ubiquinone oxidoreductase subunit 8 (145 aa).

4Fe-4S ferredoxin-type domains are found at residues 43–73 and 83–112; these read LRFY…VRVG and DWFT…HSLF. 8 residues coordinate [4Fe-4S] cluster: C53, C56, C59, C63, C92, C95, C98, and C102.

It belongs to the complex I 23 kDa subunit family. [4Fe-4S] cluster is required as a cofactor.

The protein resides in the mitochondrion. It carries out the reaction a ubiquinone + NADH + 5 H(+)(in) = a ubiquinol + NAD(+) + 4 H(+)(out). Functionally, core subunit of the mitochondrial membrane respiratory chain NADH dehydrogenase (Complex I) that is believed to belong to the minimal assembly required for catalysis. Complex I functions in the transfer of electrons from NADH to the respiratory chain. The immediate electron acceptor for the enzyme is believed to be ubiquinone. May donate electrons to ubiquinone. The chain is NADH-ubiquinone oxidoreductase subunit 8 (M-ISP1) from Trypanosoma brucei brucei.